The following is a 356-amino-acid chain: Tyrosine recombinase XerS (356 aa).

The Core-binding (CB) domain maps to 16–121 (IMPWYVLDYY…ALSSLYKYLT (106 aa)). A Tyr recombinase domain is found at 169 to 354 (AFLDYVDKEY…VNDEQKNALD (186 aa)). Active-site residues include R210, K234, H306, R309, and H332. Y341 functions as the O-(3'-phospho-DNA)-tyrosine intermediate in the catalytic mechanism.

This sequence belongs to the 'phage' integrase family. XerS subfamily.

The protein localises to the cytoplasm. Its activity is regulated as follows. FtsK is required for recombination. Functionally, site-specific tyrosine recombinase, which acts by catalyzing the cutting and rejoining of the recombining DNA molecules. Essential to convert dimers of the bacterial chromosome into monomers to permit their segregation at cell division. In Streptococcus equi subsp. zooepidemicus (strain MGCS10565), this protein is Tyrosine recombinase XerS.